Reading from the N-terminus, the 446-residue chain is Glutamate--tRNA ligase (446 aa).

Positions P9–N19 match the 'HIGH' region motif. Residues G240 to R244 carry the 'KMSKS' region motif. K243 is an ATP binding site.

The protein belongs to the class-I aminoacyl-tRNA synthetase family. Glutamate--tRNA ligase type 1 subfamily. Monomer.

The protein localises to the cytoplasm. It catalyses the reaction tRNA(Glu) + L-glutamate + ATP = L-glutamyl-tRNA(Glu) + AMP + diphosphate. Catalyzes the attachment of glutamate to tRNA(Glu) in a two-step reaction: glutamate is first activated by ATP to form Glu-AMP and then transferred to the acceptor end of tRNA(Glu). In Azospirillum brasilense, this protein is Glutamate--tRNA ligase.